The chain runs to 143 residues: Large ribosomal subunit protein uL11 (143 aa).

Belongs to the universal ribosomal protein uL11 family. As to quaternary structure, part of the ribosomal stalk of the 50S ribosomal subunit. Interacts with L10 and the large rRNA to form the base of the stalk. L10 forms an elongated spine to which L12 dimers bind in a sequential fashion forming a multimeric L10(L12)X complex. One or more lysine residues are methylated.

In terms of biological role, forms part of the ribosomal stalk which helps the ribosome interact with GTP-bound translation factors. This chain is Large ribosomal subunit protein uL11, found in Burkholderia cenocepacia (strain HI2424).